The primary structure comprises 145 residues: MNFKYIVAVSFLIASAYARSVQNDEQSLSQRDVLEEESLREIRSIGAKILGGVKTFFKGALKELASTYLQRKRTAEEQHEVMKRLEAVMRDLDSLDHPEEASEREIRGFNQEEIANLFTKKEKRILGPVISKIGGVLGGLLKNLG.

Positions 1–18 are cleaved as a signal peptide; it reads MNFKYIVAVSFLIASAYA. 2 consecutive propeptides follow at residues 19–43 and 74–124; these read RSVQ…REIR and TAEE…KEKR. Residue L144 is modified to Leucine amide.

It belongs to the bombinin family. As to expression, expressed by the skin glands.

It is found in the secreted. Maximin-5 shows antibacterial activity against both Gram-positive and Gram-negative bacteria. The only exception is the resistance of E.coli. Also shows antimicrobial activity against fungi C.albicans, A.flavus and P.uticale. It has little hemolytic activity. It does not possess a significant cytotoxicity against tumor cell lines. It does not possess a significant anti-HIV activity. In terms of biological role, maximin-H4 shows antibacterial activity against both Gram-positive and Gram-negative bacteria. It also shows antimicrobial activity against the fungus C.albicans. Shows strong hemolytic activity. This is Maximins 5/H4 type 1 from Bombina maxima (Giant fire-bellied toad).